A 554-amino-acid polypeptide reads, in one-letter code: Dihydroxy-acid dehydratase (554 aa).

Asp-78 contributes to the Mg(2+) binding site. Cys-119 is a binding site for [2Fe-2S] cluster. Residues Asp-120 and Lys-121 each contribute to the Mg(2+) site. Lys-121 carries the N6-carboxylysine modification. Cys-191 contributes to the [2Fe-2S] cluster binding site. Glu-442 serves as a coordination point for Mg(2+). Ser-468 acts as the Proton acceptor in catalysis.

It belongs to the IlvD/Edd family. As to quaternary structure, homodimer. The cofactor is [2Fe-2S] cluster. Mg(2+) serves as cofactor.

The catalysed reaction is (2R)-2,3-dihydroxy-3-methylbutanoate = 3-methyl-2-oxobutanoate + H2O. It carries out the reaction (2R,3R)-2,3-dihydroxy-3-methylpentanoate = (S)-3-methyl-2-oxopentanoate + H2O. The protein operates within amino-acid biosynthesis; L-isoleucine biosynthesis; L-isoleucine from 2-oxobutanoate: step 3/4. It functions in the pathway amino-acid biosynthesis; L-valine biosynthesis; L-valine from pyruvate: step 3/4. In terms of biological role, functions in the biosynthesis of branched-chain amino acids. Catalyzes the dehydration of (2R,3R)-2,3-dihydroxy-3-methylpentanoate (2,3-dihydroxy-3-methylvalerate) into 2-oxo-3-methylpentanoate (2-oxo-3-methylvalerate) and of (2R)-2,3-dihydroxy-3-methylbutanoate (2,3-dihydroxyisovalerate) into 2-oxo-3-methylbutanoate (2-oxoisovalerate), the penultimate precursor to L-isoleucine and L-valine, respectively. This chain is Dihydroxy-acid dehydratase, found in Hydrogenobaculum sp. (strain Y04AAS1).